A 184-amino-acid polypeptide reads, in one-letter code: Large ribosomal subunit protein uL6 (184 aa).

Belongs to the universal ribosomal protein uL6 family. In terms of assembly, part of the 50S ribosomal subunit.

This protein binds to the 23S rRNA, and is important in its secondary structure. It is located near the subunit interface in the base of the L7/L12 stalk, and near the tRNA binding site of the peptidyltransferase center. The chain is Large ribosomal subunit protein uL6 from Thermococcus onnurineus (strain NA1).